We begin with the raw amino-acid sequence, 949 residues long: Nonsense-mediated mRNA decay factor SMG8 (949 aa).

Disordered regions lie at residues 564-607, 624-652, and 748-768; these read SGAR…LSPT, NESQ…DTEN, and PKQQ…QQRW. Over residues 571 to 581 the composition is skewed to acidic residues; that stretch reads EGDDEPEDEVV. Positions 594-607 are enriched in polar residues; sequence NTASNGCSQPLSPT. Residues 624-648 show a composition bias toward low complexity; that stretch reads NESQASSEQLSNSEQNTSSSGTSSA. The segment covering 749 to 768 has biased composition (basic residues); that stretch reads KQQHHTHHQQQHPGKKQQRW.

Belongs to the SMG8 family.

Its function is as follows. Involved in nonsense-mediated decay (NMD) of mRNAs containing premature stop codons. Probable component of kinase complex containing nonC and recruited to stalled ribosomes. The polypeptide is Nonsense-mediated mRNA decay factor SMG8 (Drosophila erecta (Fruit fly)).